The sequence spans 696 residues: DNA-directed RNA polymerase subunit beta' (696 aa).

The Zn(2+) site is built by Cys70, Cys72, Cys85, and Cys88. Mg(2+) contacts are provided by Asp540, Asp542, and Asp544.

The protein belongs to the RNA polymerase beta' chain family. RpoC1 subfamily. As to quaternary structure, in plastids the minimal PEP RNA polymerase catalytic core is composed of four subunits: alpha, beta, beta', and beta''. When a (nuclear-encoded) sigma factor is associated with the core the holoenzyme is formed, which can initiate transcription. It depends on Mg(2+) as a cofactor. Requires Zn(2+) as cofactor.

The protein resides in the plastid. Its subcellular location is the chloroplast. It catalyses the reaction RNA(n) + a ribonucleoside 5'-triphosphate = RNA(n+1) + diphosphate. Functionally, DNA-dependent RNA polymerase catalyzes the transcription of DNA into RNA using the four ribonucleoside triphosphates as substrates. The chain is DNA-directed RNA polymerase subunit beta' from Phaeodactylum tricornutum (strain CCAP 1055/1).